Consider the following 585-residue polypeptide: Arginine--tRNA ligase (585 aa).

A 'HIGH' region motif is present at residues 131 to 141 (ANPTGPMHVGH).

The protein belongs to the class-I aminoacyl-tRNA synthetase family. In terms of assembly, monomer.

Its subcellular location is the cytoplasm. It carries out the reaction tRNA(Arg) + L-arginine + ATP = L-arginyl-tRNA(Arg) + AMP + diphosphate. The polypeptide is Arginine--tRNA ligase (Rhizobium etli (strain ATCC 51251 / DSM 11541 / JCM 21823 / NBRC 15573 / CFN 42)).